The following is a 159-amino-acid chain: Protein-export protein SecB (159 aa).

Belongs to the SecB family. Homotetramer, a dimer of dimers. One homotetramer interacts with 1 SecA dimer.

Its subcellular location is the cytoplasm. In terms of biological role, one of the proteins required for the normal export of preproteins out of the cell cytoplasm. It is a molecular chaperone that binds to a subset of precursor proteins, maintaining them in a translocation-competent state. It also specifically binds to its receptor SecA. The protein is Protein-export protein SecB of Marinomonas sp. (strain MWYL1).